Here is a 354-residue protein sequence, read N- to C-terminus: Holliday junction branch migration complex subunit RuvB (354 aa).

The interval 1–183 is large ATPase domain (RuvB-L); it reads MTGDNLVSAY…FGFVAHLDFY (183 aa). Residues R23, G64, K67, T68, S69, 130–132, R173, Y183, and R220 contribute to the ATP site; that span reads EDF. Residue T68 coordinates Mg(2+). Residues 184–254 form a small ATPAse domain (RuvB-S) region; that stretch reads SPADLETLLN…TAQAALTVYD (71 aa). The segment at 257-354 is head domain (RuvB-H); the sequence is ALGLDRLDRA…DLFSVEPDQP (98 aa). Residues R312 and R317 each coordinate DNA.

It belongs to the RuvB family. As to quaternary structure, homohexamer. Forms an RuvA(8)-RuvB(12)-Holliday junction (HJ) complex. HJ DNA is sandwiched between 2 RuvA tetramers; dsDNA enters through RuvA and exits via RuvB. An RuvB hexamer assembles on each DNA strand where it exits the tetramer. Each RuvB hexamer is contacted by two RuvA subunits (via domain III) on 2 adjacent RuvB subunits; this complex drives branch migration. In the full resolvosome a probable DNA-RuvA(4)-RuvB(12)-RuvC(2) complex forms which resolves the HJ.

Its subcellular location is the cytoplasm. The enzyme catalyses ATP + H2O = ADP + phosphate + H(+). In terms of biological role, the RuvA-RuvB-RuvC complex processes Holliday junction (HJ) DNA during genetic recombination and DNA repair, while the RuvA-RuvB complex plays an important role in the rescue of blocked DNA replication forks via replication fork reversal (RFR). RuvA specifically binds to HJ cruciform DNA, conferring on it an open structure. The RuvB hexamer acts as an ATP-dependent pump, pulling dsDNA into and through the RuvAB complex. RuvB forms 2 homohexamers on either side of HJ DNA bound by 1 or 2 RuvA tetramers; 4 subunits per hexamer contact DNA at a time. Coordinated motions by a converter formed by DNA-disengaged RuvB subunits stimulates ATP hydrolysis and nucleotide exchange. Immobilization of the converter enables RuvB to convert the ATP-contained energy into a lever motion, pulling 2 nucleotides of DNA out of the RuvA tetramer per ATP hydrolyzed, thus driving DNA branch migration. The RuvB motors rotate together with the DNA substrate, which together with the progressing nucleotide cycle form the mechanistic basis for DNA recombination by continuous HJ branch migration. Branch migration allows RuvC to scan DNA until it finds its consensus sequence, where it cleaves and resolves cruciform DNA. This Salinispora tropica (strain ATCC BAA-916 / DSM 44818 / JCM 13857 / NBRC 105044 / CNB-440) protein is Holliday junction branch migration complex subunit RuvB.